The primary structure comprises 276 residues: Elongation factor Ts, mitochondrial (276 aa).

Belongs to the EF-Ts family.

The protein localises to the mitochondrion. Functionally, associates with the EF-Tu.GDP complex and induces the exchange of GDP to GTP. It remains bound to the aminoacyl-tRNA.EF-Tu.GTP complex up to the GTP hydrolysis stage on the ribosome. This Leishmania major protein is Elongation factor Ts, mitochondrial.